The primary structure comprises 1475 residues: Peroxidasin homolog (1475 aa).

An N-terminal signal peptide occupies residues 1 to 23 (MAVRPTRRCLLALLLCFAWWAMA). Residues 24-60 (VVASKQGAGCPSRCLCFRTTVRCMHLLLEAVPAVAPQ) enclose the LRRNT domain. 2 cysteine pairs are disulfide-bonded: cysteine 33/cysteine 39 and cysteine 37/cysteine 46. 6 LRR repeats span residues 58 to 81 (APQT…AFRR), 82 to 105 (LRSL…AFED), 107 to 129 (ENLK…AFKG), 130 to 153 (LASL…SFQH), 154 to 177 (LPKL…TFSQ), and 179 to 201 (ESMK…LWLA). The 53-residue stretch at 189–241 (NALHCDCEILWLADLLKTYAQSGNAQAAATCEYPRRIQGRSVATITPEELNCE) folds into the LRRCT domain. 6 disulfides stabilise this stretch: cysteine 193-cysteine 240, cysteine 195-cysteine 219, cysteine 264-cysteine 314, cysteine 360-cysteine 409, cysteine 451-cysteine 499, and cysteine 543-cysteine 591. Ig-like C2-type domains are found at residues 243–329 (PRIT…QEVT), 339–425 (PTFV…AFII), 430–517 (PQFT…LTVQ), and 518–607 (PRVT…MVLS). Residue asparagine 387 is glycosylated (N-linked (GlcNAc...) asparagine). Residues 402–425 (SDSGEYTCFASNSVDSIHATAFII) form an LRR 7 repeat. N-linked (GlcNAc...) asparagine glycosylation is found at asparagine 637, asparagine 696, asparagine 716, and asparagine 728. 4 cysteine pairs are disulfide-bonded: cysteine 720–cysteine 882, cysteine 729–cysteine 745, cysteine 844–cysteine 854, and cysteine 848–cysteine 872. Residue aspartate 823 coordinates heme b. Histidine 824 acts as the Proton acceptor in catalysis. Aspartate 825 is a binding site for Ca(2+). Positions 904, 906, 908, and 910 each coordinate Ca(2+). Residues cysteine 956 and cysteine 967 are joined by a disulfide bond. A glycan (N-linked (GlcNAc...) asparagine) is linked at asparagine 961. Heme b-binding residues include glutamate 977 and histidine 1071. Residues 1148 to 1172 (ALDLAAINIQRGRDHGIPPYHDYRV) form an LRR 8 repeat. Tyrosine 1173 is subject to Phosphotyrosine. Disulfide bonds link cysteine 1174–cysteine 1231 and cysteine 1272–cysteine 1298. A glycan (N-linked (GlcNAc...) asparagine) is linked at asparagine 1175. Position 1177 is a phosphoserine (serine 1177). An LRR 9 repeat occupies 1267-1288 (LARILCDNSDNITRVQQDVFRV). Residues asparagine 1277 and asparagine 1364 are each glycosylated (N-linked (GlcNAc...) asparagine). Residues 1312–1407 (CCEDCRTRGQ…QINSLESRLS (96 aa)) are required in homotrimerization. The region spanning 1409–1467 (TECVDDSGESHGGNTKWKKDPCTVCECKNGQITCFVEACQPAACPQPVKVEGACCPVCL) is the VWFC domain.

Belongs to the peroxidase family. XPO subfamily. As to quaternary structure, homotrimer; disulfide-linked. The homotrimer form is predominant. Homooligomer; disulfide-linked. Oligomerization occurs intracellularly before C-terminal proteolytic cleavage. Interacts with PXDNL; this interaction inhibits the peroxidase activity of PXDN. Requires Ca(2+) as cofactor. It depends on heme b as a cofactor. Processed by FURIN and the proteolytic processing largely depends on the peroxidase activity of PXDN. The proteolytic cleavage occurs after intracellular homotrimerization and releases into the extracellular matrix a large, catalytically active fragment and a smaller fragment consisting primarily of the C-terminal VWFC domain. The processing enhances both peroxidase activity and sulfilimine cross-links formation. As to expression, highly expressed in the cardiovascular system. In the embryo, expressed in the corneal epithelial layer. In the adult eyes, expressed in the corneal and lens epithelium. Expressed in lung.

Its subcellular location is the secreted. It localises to the extracellular space. The protein resides in the extracellular matrix. It is found in the endoplasmic reticulum. The protein localises to the cell surface. Its subcellular location is the basement membrane. The catalysed reaction is L-lysyl-[collagen] + L-methionyl-[collagen] + H2O2 = [collagen]-L-lysyl-N-S-L-methionyl-[collagen] + 2 H2O + H(+). It catalyses the reaction bromide + H2O2 = hypobromite + H2O. The enzyme catalyses L-lysyl-[collagen] + L-methionyl-[collagen] + hypobromite = [collagen]-L-lysyl-N-S-L-methionyl-[collagen] + bromide + H2O + H(+). It carries out the reaction (5R)-5-hydroxy-L-lysyl-[collagen] + L-methionyl-[collagen] + hypobromite = [collagen]-(5R)-5-hydroxy-L-lysyl-N-S-L-methionyl-[collagen] + bromide + H2O + H(+). The catalysed reaction is (5R)-5-hydroxy-L-lysyl-[collagen] + L-methionyl-[collagen] + H2O2 = [collagen]-(5R)-5-hydroxy-L-lysyl-N-S-L-methionyl-[collagen] + 2 H2O + H(+). It catalyses the reaction L-tyrosyl-[protein] + bromide + H2O2 + H(+) = 3-bromo-L-tyrosyl-[protein] + 2 H2O. The enzyme catalyses hypobromite + L-tyrosyl-[protein] + H(+) = 3-bromo-L-tyrosyl-[protein] + H2O. Thiocyanate inhibits the formation of 3-bromotyrosine. Its function is as follows. Catalyzes the two-electron oxidation of bromide by hydrogen peroxide and generates hypobromite as a reactive intermediate which mediates the formation of sulfilimine cross-links between methionine and hydroxylysine residues within an uncross-linked collagen IV/COL4A1 NC1 hexamer. In turns, directly contributes to the collagen IV network-dependent fibronectin/FN and laminin assembly, which is required for full extracellular matrix (ECM)-mediated signaling. Thus, sulfilimine cross-links are essential for growth factor-induced cell proliferation and survival in endothelial cells, an event essential to basement membrane integrity. In addition, through the bromide oxidation, may promote tubulogenesis and induce angiogenesis through ERK1/2, Akt, and FAK pathways. Moreover brominates alpha2 collagen IV chain/COL4A2 at 'Tyr-1480' and leads to bromine enrichment of the basement membranes. In vitro, can also catalyze the two-electron oxidation of thiocyanate and iodide and these two substrates could effectively compete with bromide and thus inhibit the formation of sulfilimine bonds. Binds laminins. May play a role in the organization of eyeball structure and lens development during eye development. This Mus musculus (Mouse) protein is Peroxidasin homolog.